A 305-amino-acid polypeptide reads, in one-letter code: RNA-binding protein with serine-rich domain 1 (305 aa).

Basic residues predominate over residues 1 to 10; that stretch reads MDLSGVKKKS. A necessary for interaction with SRP54, nuclear localization and exon-skipping region spans residues 1–161; the sequence is MDLSGVKKKS…KRRSPSPKPT (161 aa). Residues 1-170 form a disordered region; sequence MDLSGVKKKS…TKVHIGRLTR (170 aa). Residues 1–220 are necessary for interaction with the cleaved p110 isoform of CDC2L1; that stretch reads MDLSGVKKKS…ENPDEAEKAL (220 aa). Glycyl lysine isopeptide (Lys-Gly) (interchain with G-Cter in SUMO2) cross-links involve residues Lys-7 and Lys-15. The segment covering 33 to 59 has biased composition (basic and acidic residues); sequence DRSDEKSKDRSKDKGTTKESSEKDRGR. A Phosphoserine modification is found at Ser-53. Residues 68-126 are compositionally biased toward low complexity; that stretch reads ASSGSSSTRSRSSSTSSSGSSTSTGSSSGSSSSSASSRSGSSSTSRSSSSSSSSGSPSP. Positions 69 to 121 are necessary for interactions with UPF2 and UPF3B and UPF2-dependent NMD; the sequence is SSGSSSTRSRSSSTSSSGSSTSTGSSSGSSSSSASSRSGSSSTSRSSSSSSSS. 2 stretches are compositionally biased toward basic residues: residues 127 to 143 and 151 to 167; these read SRRRHDNRRRSRSKSKP and RKRRSPSPKPTKVHIGR. Ser-155 and Ser-157 each carry phosphoserine. Residues 156–242 are necessary for interaction with PNN and exon-skipping; sequence PSPKPTKVHI…ITATAVLAPW (87 aa). Residues 159 to 244 form an interaction with SAP18 and ACIN1 region; sequence KPTKVHIGRL…ATAVLAPWPR (86 aa). Thr-161 is modified (phosphothreonine). Positions 161–240 constitute an RRM domain; the sequence is TKVHIGRLTR…QEITATAVLA (80 aa). Position 218 is an N6-acetyllysine (Lys-218). Residues 238-305 are necessary for interaction with TRA2B, nuclear localization and exon-skipping; that stretch reads VLAPWPRPPP…RSRSSSNSSR (68 aa). The tract at residues 240 to 305 is disordered; it reads APWPRPPPRR…RSRSSSNSSR (66 aa). Residues 242–262 are compositionally biased toward pro residues; sequence WPRPPPRRFSPPRRMLPPPPM. The segment covering 266 to 298 has biased composition (basic residues); the sequence is SPPRMRRRSRSPRRRSPVRRRSRSPGRRRHRSR.

It belongs to the splicing factor SR family. In terms of assembly, found in mRNA splicing-dependent exon junction complexes (EJC). Found in a post-splicing complex with NXF1, RBM8A, UPF1, UPF2, UPF3A, UPF3B and RNPS1. Component of the heterotrimeric ASAP (apoptosis- and splicing-associated protein) and PSAP complexes consisting of RNPS1, SAP18 and either ACIN1 or PNN, respectively; the ASAP and PSAP complexes probably are formed mutually exclusive. Component of the active spliceosome. Associates with polysomes. Interacts with the cleaved p110 isoform of CDC2L1, CSNK2A1, PNN, SART3, SRP54, SRRM1 and TRA2B/SFRS10. Phosphorylated on one or more of the four Ser/Thr residues (Ser-43, Thr-49, Ser-52 or Ser-53). Ser-53 phosphorylation site is important for splicing and translation stimulation activity in vitro.

The protein resides in the nucleus. It localises to the nucleus speckle. Its subcellular location is the cytoplasm. Its function is as follows. Part of pre- and post-splicing multiprotein mRNP complexes. Auxiliary component of the splicing-dependent multiprotein exon junction complex (EJC) deposited at splice junction on mRNAs. The EJC is a dynamic structure consisting of core proteins and several peripheral nuclear and cytoplasmic associated factors that join the complex only transiently either during EJC assembly or during subsequent mRNA metabolism. Component of the ASAP and PSAP complexes which bind RNA in a sequence-independent manner and are proposed to be recruited to the EJC prior to or during the splicing process and to regulate specific excision of introns in specific transcription subsets. The ASAP complex can inhibit RNA processing during in vitro splicing reactions. The ASAP complex promotes apoptosis and is disassembled after induction of apoptosis. Enhances the formation of the ATP-dependent A complex of the spliceosome. Involved in both constitutive splicing and, in association with SRP54 and TRA2B/SFRS10, in distinctive modulation of alternative splicing in a substrate-dependent manner. Involved in the splicing modulation of BCL2L1/Bcl-X (and probably other apoptotic genes); specifically inhibits formation of proapoptotic isoforms such as Bcl-X(S); the activity is different from the established EJC assembly and function. Participates in mRNA 3'-end cleavage. Involved in UPF2-dependent nonsense-mediated decay (NMD) of mRNAs containing premature stop codons. Also mediates increase of mRNA abundance and translational efficiency. Binds spliced mRNA 20-25 nt upstream of exon-exon junctions. The protein is RNA-binding protein with serine-rich domain 1 (Rnps1) of Rattus norvegicus (Rat).